The following is a 116-amino-acid chain: T cell receptor alpha variable 19 (116 aa).

A signal peptide spans 1–21 (MLTASLLRAVIASICVVSSMA). The Ig-like domain occupies 22-116 (QKVTQAQTEI…SAVYFCALSE (95 aa)). A disulfide bond links C43 and C112. N96 carries an N-linked (GlcNAc...) asparagine glycan.

As to quaternary structure, alpha-beta TR is a heterodimer composed of an alpha and beta chain; disulfide-linked. The alpha-beta TR is associated with the transmembrane signaling CD3 coreceptor proteins to form the TR-CD3 (TcR or TCR). The assembly of alpha-beta TR heterodimers with CD3 occurs in the endoplasmic reticulum where a single alpha-beta TR heterodimer associates with one CD3D-CD3E heterodimer, one CD3G-CD3E heterodimer and one CD247 homodimer forming a stable octameric structure. CD3D-CD3E and CD3G-CD3E heterodimers preferentially associate with TR alpha and TR beta chains, respectively. The association of the CD247 homodimer is the last step of TcR assembly in the endoplasmic reticulum and is required for transport to the cell surface.

The protein resides in the cell membrane. Functionally, v region of the variable domain of T cell receptor (TR) alpha chain that participates in the antigen recognition. Alpha-beta T cell receptors are antigen specific receptors which are essential to the immune response and are present on the cell surface of T lymphocytes. Recognize peptide-major histocompatibility (MH) (pMH) complexes that are displayed by antigen presenting cells (APC), a prerequisite for efficient T cell adaptive immunity against pathogens. Binding of alpha-beta TR to pMH complex initiates TR-CD3 clustering on the cell surface and intracellular activation of LCK that phosphorylates the ITAM motifs of CD3G, CD3D, CD3E and CD247 enabling the recruitment of ZAP70. In turn ZAP70 phosphorylates LAT, which recruits numerous signaling molecules to form the LAT signalosome. The LAT signalosome propagates signal branching to three major signaling pathways, the calcium, the mitogen-activated protein kinase (MAPK) kinase and the nuclear factor NF-kappa-B (NF-kB) pathways, leading to the mobilization of transcription factors that are critical for gene expression and essential for T cell growth and differentiation. The T cell repertoire is generated in the thymus, by V-(D)-J rearrangement. This repertoire is then shaped by intrathymic selection events to generate a peripheral T cell pool of self-MH restricted, non-autoaggressive T cells. Post-thymic interaction of alpha-beta TR with the pMH complexes shapes TR structural and functional avidity. In Homo sapiens (Human), this protein is T cell receptor alpha variable 19.